Here is a 225-residue protein sequence, read N- to C-terminus: Ribulose-phosphate 3-epimerase (225 aa).

S9 provides a ligand contact to substrate. A divalent metal cation-binding residues include H34, D36, and H68. D36 serves as the catalytic Proton acceptor. Residues H68, 144–147 (GFGG), 177–179 (DGG), and 199–200 (GS) each bind substrate. D177 contacts a divalent metal cation. D177 acts as the Proton donor in catalysis.

Belongs to the ribulose-phosphate 3-epimerase family. A divalent metal cation serves as cofactor.

It catalyses the reaction D-ribulose 5-phosphate = D-xylulose 5-phosphate. It functions in the pathway carbohydrate degradation. Catalyzes the reversible epimerization of D-ribulose 5-phosphate to D-xylulose 5-phosphate. The sequence is that of Ribulose-phosphate 3-epimerase from Escherichia coli O157:H7.